A 231-amino-acid chain; its full sequence is Flagellar L-ring protein (231 aa).

An N-terminal signal peptide occupies residues 1–18 (MNRFICVLALSGSAVLAG). A lipid anchor (N-palmitoyl cysteine) is attached at Cys-19. Residue Cys-19 is the site of S-diacylglycerol cysteine attachment.

It belongs to the FlgH family. In terms of assembly, the basal body constitutes a major portion of the flagellar organelle and consists of four rings (L,P,S, and M) mounted on a central rod.

The protein resides in the cell outer membrane. It localises to the bacterial flagellum basal body. In terms of biological role, assembles around the rod to form the L-ring and probably protects the motor/basal body from shearing forces during rotation. The protein is Flagellar L-ring protein of Pseudomonas fluorescens (strain ATCC BAA-477 / NRRL B-23932 / Pf-5).